A 183-amino-acid chain; its full sequence is Ribosome-recycling factor (183 aa).

It belongs to the RRF family.

It is found in the cytoplasm. Functionally, responsible for the release of ribosomes from messenger RNA at the termination of protein biosynthesis. May increase the efficiency of translation by recycling ribosomes from one round of translation to another. The sequence is that of Ribosome-recycling factor from Mycoplasma mobile (strain ATCC 43663 / 163K / NCTC 11711) (Mesomycoplasma mobile).